The sequence spans 329 residues: NADH-quinone oxidoreductase subunit H (329 aa).

A run of 9 helical transmembrane segments spans residues 9–29 (LIKI…ATYI), 42–62 (GPCY…IKLF), 75–95 (FIFT…MAPI), 117–137 (IGFL…ILAG), 154–174 (IQLL…LMVV), 188–208 (GGFL…FLIA), 238–258 (LKWG…SFVI), 269–291 (WGFI…LSMW), and 309–329 (WKIM…IILI).

It belongs to the complex I subunit 1 family. As to quaternary structure, NDH-1 is composed of 14 different subunits. Subunits NuoA, H, J, K, L, M, N constitute the membrane sector of the complex.

Its subcellular location is the cell inner membrane. It catalyses the reaction a quinone + NADH + 5 H(+)(in) = a quinol + NAD(+) + 4 H(+)(out). Functionally, NDH-1 shuttles electrons from NADH, via FMN and iron-sulfur (Fe-S) centers, to quinones in the respiratory chain. The immediate electron acceptor for the enzyme in this species is believed to be ubiquinone. Couples the redox reaction to proton translocation (for every two electrons transferred, four hydrogen ions are translocated across the cytoplasmic membrane), and thus conserves the redox energy in a proton gradient. This subunit may bind ubiquinone. This Helicobacter pylori (strain ATCC 700392 / 26695) (Campylobacter pylori) protein is NADH-quinone oxidoreductase subunit H.